The primary structure comprises 197 residues: Large ribosomal subunit protein bL25 (197 aa).

It belongs to the bacterial ribosomal protein bL25 family. CTC subfamily. Part of the 50S ribosomal subunit; part of the 5S rRNA/L5/L18/L25 subcomplex. Contacts the 5S rRNA. Binds to the 5S rRNA independently of L5 and L18.

Functionally, this is one of the proteins that binds to the 5S RNA in the ribosome where it forms part of the central protuberance. The protein is Large ribosomal subunit protein bL25 of Hydrogenobaculum sp. (strain Y04AAS1).